Consider the following 400-residue polypeptide: Argininosuccinate synthase (400 aa).

ATP is bound by residues 10 to 18 and Ala38; that span reads AYSGGVDTS. Tyr89 lines the L-citrulline pocket. Residue Gly119 coordinates ATP. The L-aspartate site is built by Thr121, Asn125, and Asp126. Asn125 serves as a coordination point for L-citrulline. Arg129, Ser177, Ser186, Glu262, and Tyr274 together coordinate L-citrulline.

The protein belongs to the argininosuccinate synthase family. Type 1 subfamily. In terms of assembly, homotetramer.

Its subcellular location is the cytoplasm. It catalyses the reaction L-citrulline + L-aspartate + ATP = 2-(N(omega)-L-arginino)succinate + AMP + diphosphate + H(+). Its pathway is amino-acid biosynthesis; L-arginine biosynthesis; L-arginine from L-ornithine and carbamoyl phosphate: step 2/3. This Crocosphaera subtropica (strain ATCC 51142 / BH68) (Cyanothece sp. (strain ATCC 51142)) protein is Argininosuccinate synthase.